A 114-amino-acid chain; its full sequence is Ferredoxin (114 aa).

[3Fe-4S] cluster-binding residues include C9 and C17. Residues C21, C40, C43, and C46 each contribute to the [4Fe-4S] cluster site. Residues 31 to 60 (RMLYINPDECVDCGACKPACRVEAIYWEGD) form the 4Fe-4S ferredoxin-type domain. C50 contacts [3Fe-4S] cluster.

The cofactor is [4Fe-4S] cluster. [3Fe-4S] cluster is required as a cofactor.

In terms of biological role, ferredoxins are iron-sulfur proteins that transfer electrons in a wide variety of metabolic reactions. This Mycobacterium tuberculosis (strain ATCC 25618 / H37Rv) protein is Ferredoxin (fdxA).